The sequence spans 270 residues: Chymotrypsin-like elastase family member 3B (270 aa).

Residues 1–15 constitute a signal peptide (or 16); it reads MMLRLLSSLLLVAVA. Positions 16–28 are cleaved as a propeptide — activation peptide; it reads SGYGPPSSRPSSR. A Peptidase S1 domain is found at 29–268; sequence VVNGEDAVPY…FIDWIEETIA (240 aa). Cys-58 and Cys-74 form a disulfide bridge. The active-site Charge relay system is the His-73. Asn-114 carries N-linked (GlcNAc...) asparagine glycosylation. Cys-117 and Cys-120 are disulfide-bonded. Asp-123 serves as the catalytic Charge relay system. 3 disulfide bridges follow: Cys-157–Cys-223, Cys-188–Cys-204, and Cys-213–Cys-244. Ser-217 functions as the Charge relay system in the catalytic mechanism.

This sequence belongs to the peptidase S1 family. Elastase subfamily. In terms of tissue distribution, pancreas. Not detectable in keratinocytes.

The catalysed reaction is Preferential cleavage: Ala-|-Xaa. Does not hydrolyze elastin.. Functionally, efficient protease with alanine specificity but only little elastolytic activity. The protein is Chymotrypsin-like elastase family member 3B (CELA3B) of Homo sapiens (Human).